Here is a 116-residue protein sequence, read N- to C-terminus: Ribosome-binding factor A (116 aa).

The protein belongs to the RbfA family. As to quaternary structure, monomer. Binds 30S ribosomal subunits, but not 50S ribosomal subunits or 70S ribosomes.

Its subcellular location is the cytoplasm. In terms of biological role, one of several proteins that assist in the late maturation steps of the functional core of the 30S ribosomal subunit. Associates with free 30S ribosomal subunits (but not with 30S subunits that are part of 70S ribosomes or polysomes). Required for efficient processing of 16S rRNA. May interact with the 5'-terminal helix region of 16S rRNA. This is Ribosome-binding factor A from Streptococcus pyogenes serotype M3 (strain SSI-1).